A 135-amino-acid polypeptide reads, in one-letter code: Histone H3 (135 aa).

The disordered stretch occupies residues 1–40 (MARTKQTARKSTGGKAPRKAVATKARKTAPPVGGVKKPHR). Low complexity predominate over residues 19-31 (KAVATKARKTAPP).

This sequence belongs to the histone H3 family. The nucleosome is a histone octamer containing two molecules each of H2A, H2B, H3 and H4 assembled in one H3-H4 heterotetramer and two H2A-H2B heterodimers. The octamer wraps approximately 147 bp of DNA.

The protein resides in the nucleus. It is found in the chromosome. Core component of nucleosome. Nucleosomes wrap and compact DNA into chromatin, limiting DNA accessibility to the cellular machineries which require DNA as a template. Histones thereby play a central role in transcription regulation, DNA repair, DNA replication and chromosomal stability. DNA accessibility is regulated via a complex set of post-translational modifications of histones, also called histone code, and nucleosome remodeling. The sequence is that of Histone H3 from Mastigamoeba balamuthi (Phreatamoeba balamuthi).